Here is a 109-residue protein sequence, read N- to C-terminus: Polyprenyl transferase subC (109 aa).

A run of 2 helical transmembrane segments spans residues 39 to 59 and 84 to 104; these read LFCVLAAYLFCGAGMVWNDWI and QAFVWMALQVIASCAVLHVML.

Belongs to the UbiA prenyltransferase family. Mg(2+) serves as cofactor.

It is found in the membrane. It functions in the pathway secondary metabolite biosynthesis; terpenoid biosynthesis. Polyprenyl transferase; part of the gene cluster that mediates the biosynthesis of the immunosuppressants subglutinols, meroterpenoids consisting of an alpha-pyrone (4-hydroxy-5,6-dimethyl-2-pyrone) moiety attached to a decalin core fused to a five-membered cyclic ether carrying a prenylside chain. The first step of the pathway is the synthesis of the alpha-pyrone moiety by the polyketide synthase subA via condensation of one acetyl-CoA starter unit with 3 malonyl-CoA units and 2 methylations. The alpha-pyrone is then combined with geranylgeranyl pyrophosphate (GGPP) formed by the GGPP synthase subD through the action of the prenyltransferase subC to yield a linear alpha-pyrone diterpenoid. Subsequent steps in the subglutinol biosynthetic pathway involve the decalin core formation, which is thought to be initiated by the epoxidation of the C10-C11 olefin by the FAD-dependent oxidoreductase subE. The following cyclization cascade would be catalyzed by the terpene cyclase subB. Lastly, the FAD-dependent dehydrogenase subF probably catalyzes the five-membered cyclic ether formation to complete the formation of subglutinol A. Subsequent redox reactions appear to give rise to subglutinol C and D, however, it remains unclear which enzymes are responsible for these transformations. SubD may have secondary function in the conversion of the identified subglutinols to subglutinol analog 45, which seems to be the major product of the cluster. The protein is Polyprenyl transferase subC of Metarhizium robertsii (strain ARSEF 23 / ATCC MYA-3075) (Metarhizium anisopliae (strain ARSEF 23)).